The following is a 744-amino-acid chain: Deleted in azoospermia protein 1 (744 aa).

Polar residues predominate over residues 1 to 10 (MSAANPETPN). Residues 1-27 (MSAANPETPNSTISREASTQSSSAAAS) form a disordered region. Residues 11–27 (STISREASTQSSSAAAS) are compositionally biased toward low complexity. The region spanning 40–115 (NTVFVGGIDA…KKLKLGPAIR (76 aa)) is the RRM 1 domain. Positions 163 to 175 (QHVQSAANPETPN) are enriched in polar residues. The disordered stretch occupies residues 163-192 (QHVQSAANPETPNSTISREASTQSSSAAAS). Over residues 176–192 (STISREASTQSSSAAAS) the composition is skewed to low complexity. The region spanning 205-280 (NTVFVGGIDA…KKLKLGPAIR (76 aa)) is the RRM 2 domain. Over residues 328 to 340 (QHVQSAANPETPN) the composition is skewed to polar residues. A disordered region spans residues 328–357 (QHVQSAANPETPNSTISREASTQSSSAAAS). A compositionally biased stretch (low complexity) spans 341-357 (STISREASTQSSSAAAS). The RRM 3 domain maps to 370–445 (NTVFVGGIDA…KKLKLGPAIR (76 aa)). 9 DAZ domains span residues 497-520 (AYSA…YNYQ), 521-544 (EYPT…YNYQ), 545-568 (PFPA…YNYQ), 569-592 (AFPA…YNYQ), 593-616 (PFPA…YNYQ), 617-640 (AFPA…YNYQ), 641-664 (AFPA…YNYQ), 665-688 (AFPA…YNYQ), and 689-712 (AFPA…YNYQ).

The protein belongs to the RRM DAZ family. Forms a heterodimer with BOLL and DAZL. Interacts with PUM2, DAZAP1, DAZAP2, DZIP1 and DZIP3. Testis-specific. Expression restricted to premeiotic germ cells, particularly in spermatogonia (at protein level).

The protein resides in the cytoplasm. It localises to the nucleus. RNA-binding protein that plays an essential role in spermatogenesis. May act by binding to the 3'-UTR of mRNAs and regulating their translation. Promotes germ-cell progression to meiosis and formation of haploid germ cells. This Homo sapiens (Human) protein is Deleted in azoospermia protein 1 (DAZ1).